The primary structure comprises 595 residues: Estrogen receptor (595 aa).

Positions Met-1–Tyr-184 are modulating(transactivation AF-1); mediates interaction with MACROD1. O-linked (GlcNAc) serine glycosylation is present at Ser-10. A required for interaction with NCOA1 region spans residues Leu-35–Ser-47. Positions Leu-35–Met-174 are interaction with DDX5; self-association. Residues Ser-103 and Ser-105 each carry the phosphoserine; by CDK2 modification. Phosphoserine is present on Ser-118. A disordered region spans residues Asp-143–Met-174. A compositionally biased stretch (basic and acidic residues) spans Ser-154–Leu-165. Phosphoserine; by CK2 is present on Ser-167. NR C4-type zinc fingers lie at residues Cys-185–Cys-205 and Cys-221–Cys-245. Positions Cys-185–Met-250 form a DNA-binding region, nuclear receptor. A mediates interaction with DNTTIP2 region spans residues Cys-185–Leu-310. The hinge stretch occupies residues Met-251–Leu-310. An Asymmetric dimethylarginine; by PRMT1 modification is found at Arg-260. The span at Arg-260–Arg-269 shows a compositional bias: basic residues. The tract at residues Arg-260 to Asp-285 is disordered. Positions Gly-262–Ile-595 are interaction with AKAP13. Positions Met-264–Ile-595 are self-association. The 237-residue stretch at Thr-311–His-547 folds into the NR LBD domain. The tract at residues Thr-311–Ile-595 is transactivation AF-2. 17beta-estradiol-binding residues include Glu-353 and Arg-394. A lipid anchor (S-palmitoyl cysteine) is attached at Cys-447. A 17beta-estradiol-binding site is contributed by His-524. Tyr-537 bears the Phosphotyrosine; by Tyr-kinases mark. The tract at residues Ser-554 to Ser-578 is disordered. Over residues Ser-564–Ser-578 the composition is skewed to low complexity. A glycan (O-linked (GlcNAc) threonine) is linked at Thr-571.

This sequence belongs to the nuclear hormone receptor family. NR3 subfamily. Binds DNA as a homodimer. Can form a heterodimer with ESR2. Interacts with coactivator NCOA5. Interacts with PELP1, the interaction is enhanced by 17-beta-estradiol; the interaction increases ESR1 transcriptional activity. Interacts with NCOA7; the interaction is ligand-inducible. Interacts with AKAP13, CUEDC2, HEXIM1, KDM5A, MAP1S, SMARD1, and UBE1C. Interacts with MUC1; the interaction is stimulated by 7 beta-estradiol (E2) and enhances ESR1-mediated transcription. Interacts with DNTTIP2, and UIMC1. Interacts with KMT2D/MLL2. Interacts with ATAD2; the interaction is enhanced by estradiol. Interacts with KIF18A and LDB1. Interacts with RLIM (via its C-terminus). Interacts with MACROD1. Interacts with SH2D4A and PLCG. Interacts with SH2D4A; the interaction blocks binding to PLCG and inhibits estrogen-induced cell proliferation. Interacts with DYNLL1. Interacts with CCDC62; the interaction requires estradiol and appears to enhance the transcription of target genes. Interacts with NR2C1; the interaction prevents homodimerization of ESR1 and suppresses its transcriptional activity and cell growth. Interacts with DNAAF4. Interacts with PRMT2. Interacts with RBFOX2. Interacts with EP300; the interaction is estrogen-dependent and enhanced by CITED1. Interacts with CITED1; the interaction is estrogen-dependent. Interacts with FAM120B, FOXL2, PHB2 and SLC30A9. Interacts with coactivators NCOA3 and NCOA6. Interacts with STK3/MST2 only in the presence of SAV1 and vice-versa. Binds to CSNK1D. Interacts with NCOA2; NCOA2 can interact with ESR1 AF-1 and AF-2 domains simultaneously and mediate their transcriptional synergy. Interacts with DDX5. Interacts with NCOA1; the interaction seems to require a self-association of N-terminal and C-terminal regions. Interacts with ZNF366, DDX17, NFKB1, RELA, SP1 and SP3. Interacts with NRIP1. Interacts with GPER1; the interaction occurs in an estrogen-dependent manner. Interacts with CLOCK and the interaction is stimulated by estrogen. Interacts with TRIP4 (ufmylated); estrogen dependent. Interacts with LMTK3; the interaction phosphorylates ESR1 (in vitro) and protects it against proteasomal degradation. Interacts with CCAR2 (via N-terminus) in a ligand-independent manner. Interacts with ZFHX3. Interacts with SFR1 in a ligand-dependent and -independent manner. Interacts with DCAF13, LATS1 and DCAF1; regulates ESR1 ubiquitination and ubiquitin-mediated proteasomal degradation. Interacts (via DNA-binding domain) with POU4F2 (C-terminus); this interaction increases the estrogen receptor ESR1 transcriptional activity in a DNA- and ligand 17-beta-estradiol-independent manner. Interacts with ESRRB isoform 1. Interacts with UBE3A and WBP2. Interacts with GTF2B. Interacts with RBM39. In the absence of hormonal ligand, interacts with TACC1. Interacts with PI3KR1 or PI3KR2 and PTK2/FAK1. Interacts with SRC. Interacts with BAG1; the interaction is promoted in the absence of estradiol (17-beta-estradiol/E2). Interacts with and ubiquitinated by STUB1; the interaction is promoted in the absence of estradiol (17-beta-estradiol/E2). Interacts with NEDD8. Ubiquitinated; regulated by LATS1 via DCAF1 it leads to ESR1 proteasomal degradation. Deubiquitinated by OTUB1. Ubiquitinated by STUB1/CHIP; in the CA1 hippocampal region following loss of endogenous circulating estradiol (17-beta-estradiol/E2). Ubiquitinated by UBR5, leading to its degradation: UBR5 specifically recognizes and binds ligand-bound ESR1 when it is not associated with coactivators (NCOAs). In presence of NCOAs, the UBR5-degron is not accessible, preventing its ubiquitination and degradation. In terms of processing, phosphorylated by cyclin A/CDK2 and CK1. Phosphorylation probably enhances transcriptional activity. Dephosphorylation at Ser-118 by PPP5C inhibits its transactivation activity. Phosphorylated by LMTK3 (in vitro). Post-translationally, palmitoylated at Cys-447 by ZDHHC7 and ZDHHC21. Palmitoylation is required for plasma membrane targeting and for rapid intracellular signaling via ERK and AKT kinases and cAMP generation, but not for signaling mediated by the nuclear hormone receptor. Dimethylated by PRMT1 at Arg-260. The methylation may favor cytoplasmic localization. Demethylated by JMJD6 at Arg-260.

It localises to the nucleus. The protein localises to the cytoplasm. It is found in the golgi apparatus. The protein resides in the cell membrane. Functionally, nuclear hormone receptor. The steroid hormones and their receptors are involved in the regulation of eukaryotic gene expression and affect cellular proliferation and differentiation in target tissues. Ligand-dependent nuclear transactivation involves either direct homodimer binding to a palindromic estrogen response element (ERE) sequence or association with other DNA-binding transcription factors, such as AP-1/c-Jun, c-Fos, ATF-2, Sp1 and Sp3, to mediate ERE-independent signaling. Ligand binding induces a conformational change allowing subsequent or combinatorial association with multiprotein coactivator complexes through LXXLL motifs of their respective components. Mutual transrepression occurs between the estrogen receptor (ER) and NF-kappa-B in a cell-type specific manner. Decreases NF-kappa-B DNA-binding activity and inhibits NF-kappa-B-mediated transcription from the IL6 promoter and displace RELA/p65 and associated coregulators from the promoter. Recruited to the NF-kappa-B response element of the CCL2 and IL8 promoters and can displace CREBBP. Present with NF-kappa-B components RELA/p65 and NFKB1/p50 on ERE sequences. Can also act synergistically with NF-kappa-B to activate transcription involving respective recruitment adjacent response elements; the function involves CREBBP. Can activate the transcriptional activity of TFF1. Also mediates membrane-initiated estrogen signaling involving various kinase cascades. Essential for MTA1-mediated transcriptional regulation of BRCA1 and BCAS3. Maintains neuronal survival in response to ischemic reperfusion injury when in the presence of circulating estradiol (17-beta-estradiol/E2). This is Estrogen receptor (ESR1) from Mesocricetus auratus (Golden hamster).